A 534-amino-acid polypeptide reads, in one-letter code: Glycerol kinase 5 (534 aa).

Positions 33 and 34 each coordinate ATP. Residues Arg-103, Asp-280, and Gln-281 each coordinate glycerol. ATP contacts are provided by Thr-302, Gly-345, and Gly-445.

It belongs to the FGGY kinase family. Expressed predominantly in sebaceous glands.

It is found in the cytoplasm. The enzyme catalyses glycerol + ATP = sn-glycerol 3-phosphate + ADP + H(+). It functions in the pathway polyol metabolism; glycerol degradation via glycerol kinase pathway; sn-glycerol 3-phosphate from glycerol: step 1/1. Functionally, skin-specific kinase that plays a key role in glycerol metabolism, catalyzing its phosphorylation to produce sn-glycerol 3-phosphate. Involved in skin-specific regulation of sterol regulatory element-binding protein (SREBP) processing and lipid biosynthesis. This is Glycerol kinase 5 (Gk5) from Mus musculus (Mouse).